A 64-amino-acid polypeptide reads, in one-letter code: Large ribosomal subunit protein uL30 (64 aa).

The protein belongs to the universal ribosomal protein uL30 family. In terms of assembly, part of the 50S ribosomal subunit.

This Methylorubrum extorquens (strain CM4 / NCIMB 13688) (Methylobacterium extorquens) protein is Large ribosomal subunit protein uL30.